Reading from the N-terminus, the 130-residue chain is Ribosome-binding factor A (130 aa).

This sequence belongs to the RbfA family. As to quaternary structure, monomer. Binds 30S ribosomal subunits, but not 50S ribosomal subunits or 70S ribosomes.

Its subcellular location is the cytoplasm. In terms of biological role, one of several proteins that assist in the late maturation steps of the functional core of the 30S ribosomal subunit. Associates with free 30S ribosomal subunits (but not with 30S subunits that are part of 70S ribosomes or polysomes). Required for efficient processing of 16S rRNA. May interact with the 5'-terminal helix region of 16S rRNA. This Roseiflexus sp. (strain RS-1) protein is Ribosome-binding factor A.